We begin with the raw amino-acid sequence, 155 residues long: Ribosome maturation factor RimP (155 aa).

Belongs to the RimP family.

It localises to the cytoplasm. Its function is as follows. Required for maturation of 30S ribosomal subunits. The polypeptide is Ribosome maturation factor RimP (Parabacteroides distasonis (strain ATCC 8503 / DSM 20701 / CIP 104284 / JCM 5825 / NCTC 11152)).